The sequence spans 343 residues: MNFCRILLKPLKKNEALSGYSAEGLHYLTDNKHFNPELPFSRQEFITVKPQKQQGMSISGFQPKLQLIIKDEHFDSVNQQGNYILKPSPEEYPFLAENEHATMRIMKELGFDVPENGLVSFAGEQNHKEFAFVITRFDRDKQQKPMHQEQLDGAMNIRDKYGKIGADNEQYVSYEQIAKFILQHTENHLAQQREIFRRIIYAYLLGNNDLHLRNFSFIYPKNSHPKLAPIYDFVSVSPYPEIFNSTLLALPLLAREEGNATLAKGFNTQYGEYIGDDFVEFGENIGLNKNVIIQKLIPEIIQEKEKVEQIYSQSFMPQPHIDCVLKTYRKRLALLNLLNEPEL.

Catalysis depends on Asp209, which acts as the Proton acceptor.

The protein belongs to the HipA Ser/Thr kinase family.

This Haemophilus influenzae (strain ATCC 51907 / DSM 11121 / KW20 / Rd) protein is Putative kinase HI_0665.